A 184-amino-acid polypeptide reads, in one-letter code: UPF0149 protein PputGB1_5261 (184 aa).

The protein belongs to the UPF0149 family.

This chain is UPF0149 protein PputGB1_5261, found in Pseudomonas putida (strain GB-1).